The sequence spans 230 residues: Geranylgeranylglyceryl phosphate synthase (230 aa).

Residue lysine 13 participates in sn-glycerol 1-phosphate binding. Mg(2+) contacts are provided by aspartate 15 and threonine 41. Sn-glycerol 1-phosphate is bound by residues 161-166, glycine 191, and 211-212; these read YIEYSG and GN.

The protein belongs to the GGGP/HepGP synthase family. Group I subfamily. Mg(2+) serves as cofactor.

Its subcellular location is the cytoplasm. It carries out the reaction sn-glycerol 1-phosphate + (2E,6E,10E)-geranylgeranyl diphosphate = sn-3-O-(geranylgeranyl)glycerol 1-phosphate + diphosphate. It functions in the pathway membrane lipid metabolism; glycerophospholipid metabolism. Functionally, prenyltransferase that catalyzes the transfer of the geranylgeranyl moiety of geranylgeranyl diphosphate (GGPP) to the C3 hydroxyl of sn-glycerol-1-phosphate (G1P). This reaction is the first ether-bond-formation step in the biosynthesis of archaeal membrane lipids. This chain is Geranylgeranylglyceryl phosphate synthase, found in Methanoculleus marisnigri (strain ATCC 35101 / DSM 1498 / JR1).